Consider the following 336-residue polypeptide: Holliday junction branch migration complex subunit RuvB (336 aa).

Residues 4 to 184 (ADRLISAASN…FGIVQRLEFY (181 aa)) form a large ATPase domain (RuvB-L) region. Residues Ile23, Arg24, Gly65, Lys68, Thr69, Thr70, 131–133 (EDY), Arg174, Tyr184, and Arg221 contribute to the ATP site. Thr69 serves as a coordination point for Mg(2+). The small ATPAse domain (RuvB-S) stretch occupies residues 185-255 (QVPDLQYIVG…VAAQALDMLN (71 aa)). Positions 258 to 336 (AEGFDYMDRK…HFGITPPEMP (79 aa)) are head domain (RuvB-H). Residues Arg294, Arg313, and Arg318 each coordinate DNA.

The protein belongs to the RuvB family. Homohexamer. Forms an RuvA(8)-RuvB(12)-Holliday junction (HJ) complex. HJ DNA is sandwiched between 2 RuvA tetramers; dsDNA enters through RuvA and exits via RuvB. An RuvB hexamer assembles on each DNA strand where it exits the tetramer. Each RuvB hexamer is contacted by two RuvA subunits (via domain III) on 2 adjacent RuvB subunits; this complex drives branch migration. In the full resolvosome a probable DNA-RuvA(4)-RuvB(12)-RuvC(2) complex forms which resolves the HJ.

The protein localises to the cytoplasm. The catalysed reaction is ATP + H2O = ADP + phosphate + H(+). In terms of biological role, the RuvA-RuvB-RuvC complex processes Holliday junction (HJ) DNA during genetic recombination and DNA repair, while the RuvA-RuvB complex plays an important role in the rescue of blocked DNA replication forks via replication fork reversal (RFR). RuvA specifically binds to HJ cruciform DNA, conferring on it an open structure. The RuvB hexamer acts as an ATP-dependent pump, pulling dsDNA into and through the RuvAB complex. RuvB forms 2 homohexamers on either side of HJ DNA bound by 1 or 2 RuvA tetramers; 4 subunits per hexamer contact DNA at a time. Coordinated motions by a converter formed by DNA-disengaged RuvB subunits stimulates ATP hydrolysis and nucleotide exchange. Immobilization of the converter enables RuvB to convert the ATP-contained energy into a lever motion, pulling 2 nucleotides of DNA out of the RuvA tetramer per ATP hydrolyzed, thus driving DNA branch migration. The RuvB motors rotate together with the DNA substrate, which together with the progressing nucleotide cycle form the mechanistic basis for DNA recombination by continuous HJ branch migration. Branch migration allows RuvC to scan DNA until it finds its consensus sequence, where it cleaves and resolves cruciform DNA. The chain is Holliday junction branch migration complex subunit RuvB from Enterobacter sp. (strain 638).